The primary structure comprises 437 residues: tRNA-2-methylthio-N(6)-dimethylallyladenosine synthase (437 aa).

In terms of domain architecture, MTTase N-terminal spans 5-121 (KKLYIKTYGC…LPELTARAAT (117 aa)). [4Fe-4S] cluster contacts are provided by cysteine 14, cysteine 50, cysteine 84, cysteine 159, cysteine 163, and cysteine 166. The 227-residue stretch at 145–371 (AKRGPTAFLT…QALLTRQQRA (227 aa)) folds into the Radical SAM core domain. Positions 374 to 436 (DAKVGTTARV…ANSLRGVLIA (63 aa)) constitute a TRAM domain.

This sequence belongs to the methylthiotransferase family. MiaB subfamily. As to quaternary structure, monomer. [4Fe-4S] cluster serves as cofactor.

It localises to the cytoplasm. The enzyme catalyses N(6)-dimethylallyladenosine(37) in tRNA + (sulfur carrier)-SH + AH2 + 2 S-adenosyl-L-methionine = 2-methylsulfanyl-N(6)-dimethylallyladenosine(37) in tRNA + (sulfur carrier)-H + 5'-deoxyadenosine + L-methionine + A + S-adenosyl-L-homocysteine + 2 H(+). In terms of biological role, catalyzes the methylthiolation of N6-(dimethylallyl)adenosine (i(6)A), leading to the formation of 2-methylthio-N6-(dimethylallyl)adenosine (ms(2)i(6)A) at position 37 in tRNAs that read codons beginning with uridine. The chain is tRNA-2-methylthio-N(6)-dimethylallyladenosine synthase from Dinoroseobacter shibae (strain DSM 16493 / NCIMB 14021 / DFL 12).